The sequence spans 188 residues: Small ribosomal subunit protein uS7 (188 aa).

The protein belongs to the universal ribosomal protein uS7 family. Part of the 30S ribosomal subunit.

In terms of biological role, one of the primary rRNA binding proteins, it binds directly to 16S rRNA where it nucleates assembly of the head domain of the 30S subunit. Is located at the subunit interface close to the decoding center. This chain is Small ribosomal subunit protein uS7, found in Methanococcus maripaludis (strain C7 / ATCC BAA-1331).